Reading from the N-terminus, the 231-residue chain is MATNTMLCLLILSVVLALAFATNKKGDEEPENHSTGIFGKVGRVVTVALAMSSRLGGADATRGGGAVYGGNLKSNLLPNNNWMAPPPPMAMRSAKVYDSKHSPAEYLKKFAQDFRRKTGMHSQRHHEETTLEQEKRVAGAGPDPIHHQDTTLEQEKRAVPAGPDPKHHEETTLEQEKRAVPAGPDPKHHEETTLEQEKRAVPAGPDPKHHEETTFEQEKRGAPAGPDPIHH.

The signal sequence occupies residues Met1–Ala21. The required for secretion from the host cytoplasm to the host apoplasm stretch occupies residues Ala21–Met83. Asn32 is a glycosylation site (N-linked (GlcNAc...) asparagine). The disordered stretch occupies residues Arg116–His231. 2 stretches are compositionally biased toward basic and acidic residues: residues His125–Val137 and Pro144–Gly221. The stretch at Glu127–Lys135 is one A-1 repeat. The interval Glu127 to Lys219 is 5 X approximate repeat A. A CLE-1 repeat occupies Arg136 to His147. Positions Arg136–His231 are 5 X approximate repeat CLE. The A-2 repeat unit spans residues Gln148–Lys156. A CLE-2 repeat occupies Arg157 to His168. One copy of the A-3 repeat lies at Glu169–Lys177. The CLE-3 repeat unit spans residues Arg178–His189. An A-4 repeat occupies Glu190–Lys198. Residues Arg199–His210 form a CLE-4 repeat. The A-5 repeat unit spans residues Glu211 to Lys219. One copy of the CLE-5 repeat lies at Arg220 to His231.

It belongs to the CLV3/ESR signal peptide family. In terms of tissue distribution, highly expressed exclusively within the dorsal esophageal gland cell during syncytium formation in host plants.

Its subcellular location is the secreted. The protein resides in the host cytoplasm. The protein localises to the host extracellular space. It is found in the extracellular space. It localises to the apoplast. In terms of biological role, mimics host plant CLE extracellular signal peptides that regulate cell fate. May play a role in the differentiation or division of feeding cells (syncytia) induced in plant roots during infection. This is CLAVATA3/ESR (CLE)-related protein 4B-1 (CLE-4B-1) from Globodera rostochiensis (Golden nematode worm).